The sequence spans 309 residues: Ribonuclease Z (309 aa).

7 residues coordinate Zn(2+): His63, His65, Asp67, His68, His145, Asp216, and His274. The active-site Proton acceptor is Asp67.

The protein belongs to the RNase Z family. In terms of assembly, homodimer. Zn(2+) serves as cofactor.

It catalyses the reaction Endonucleolytic cleavage of RNA, removing extra 3' nucleotides from tRNA precursor, generating 3' termini of tRNAs. A 3'-hydroxy group is left at the tRNA terminus and a 5'-phosphoryl group is left at the trailer molecule.. Zinc phosphodiesterase, which displays some tRNA 3'-processing endonuclease activity. Probably involved in tRNA maturation, by removing a 3'-trailer from precursor tRNA. This is Ribonuclease Z from Streptococcus mutans serotype c (strain ATCC 700610 / UA159).